The following is a 161-amino-acid chain: Large ribosomal subunit protein uL29c (161 aa).

Residues 1 to 61 (MATMSLAAAS…ERRAAAMVAM (61 aa)) constitute a chloroplast transit peptide.

Belongs to the universal ribosomal protein uL29 family. As to quaternary structure, part of the 50S ribosomal subunit.

Its subcellular location is the plastid. It is found in the chloroplast. This chain is Large ribosomal subunit protein uL29c (RPL29), found in Zea mays (Maize).